The chain runs to 527 residues: UPF0053 protein YegH (527 aa).

The next 5 membrane-spanning stretches (helical) occupy residues 14 to 34, 51 to 71, 81 to 101, 145 to 165, and 185 to 205; these read ITLI…IAIL, LLLA…LVTL, FTFS…LFKA, ITAV…VIAI, and IVIL…AEGF. CBS domains are found at residues 306–366 and 371–429; these read MTSR…GEPL and LIRQ…PNEV.

This sequence belongs to the UPF0053 family.

Its subcellular location is the cell membrane. The polypeptide is UPF0053 protein YegH (yegH) (Escherichia coli (strain K12)).